A 556-amino-acid chain; its full sequence is DNA ligase (556 aa).

Position 245 (E245) interacts with ATP. K247 acts as the N6-AMP-lysine intermediate in catalysis. ATP-binding residues include R252, R267, E296, F336, R408, and K414.

Belongs to the ATP-dependent DNA ligase family. Mg(2+) serves as cofactor.

It carries out the reaction ATP + (deoxyribonucleotide)n-3'-hydroxyl + 5'-phospho-(deoxyribonucleotide)m = (deoxyribonucleotide)n+m + AMP + diphosphate.. In terms of biological role, DNA ligase that seals nicks in double-stranded DNA during DNA replication, DNA recombination and DNA repair. The sequence is that of DNA ligase from Methanosphaerula palustris (strain ATCC BAA-1556 / DSM 19958 / E1-9c).